The sequence spans 319 residues: Lipoyl synthase (319 aa).

Cysteine 61, cysteine 66, cysteine 72, cysteine 87, cysteine 91, cysteine 94, and serine 300 together coordinate [4Fe-4S] cluster. One can recognise a Radical SAM core domain in the interval 73–289 (WDKKHATFMI…ESVAYSKGFL (217 aa)).

This sequence belongs to the radical SAM superfamily. Lipoyl synthase family. The cofactor is [4Fe-4S] cluster.

It localises to the cytoplasm. It carries out the reaction [[Fe-S] cluster scaffold protein carrying a second [4Fe-4S](2+) cluster] + N(6)-octanoyl-L-lysyl-[protein] + 2 oxidized [2Fe-2S]-[ferredoxin] + 2 S-adenosyl-L-methionine + 4 H(+) = [[Fe-S] cluster scaffold protein] + N(6)-[(R)-dihydrolipoyl]-L-lysyl-[protein] + 4 Fe(3+) + 2 hydrogen sulfide + 2 5'-deoxyadenosine + 2 L-methionine + 2 reduced [2Fe-2S]-[ferredoxin]. It participates in protein modification; protein lipoylation via endogenous pathway; protein N(6)-(lipoyl)lysine from octanoyl-[acyl-carrier-protein]: step 2/2. Its function is as follows. Catalyzes the radical-mediated insertion of two sulfur atoms into the C-6 and C-8 positions of the octanoyl moiety bound to the lipoyl domains of lipoate-dependent enzymes, thereby converting the octanoylated domains into lipoylated derivatives. This chain is Lipoyl synthase, found in Rhodopseudomonas palustris (strain BisB18).